The sequence spans 550 residues: Chaperonin GroEL (550 aa).

ATP contacts are provided by residues 30–33 (TLGP), Lys-51, 87–91 (DGTTT), Gly-415, 478–480 (NAA), and Asp-494.

It belongs to the chaperonin (HSP60) family. Forms a cylinder of 14 subunits composed of two heptameric rings stacked back-to-back. Interacts with the co-chaperonin GroES.

The protein resides in the cytoplasm. The catalysed reaction is ATP + H2O + a folded polypeptide = ADP + phosphate + an unfolded polypeptide.. Functionally, together with its co-chaperonin GroES, plays an essential role in assisting protein folding. The GroEL-GroES system forms a nano-cage that allows encapsulation of the non-native substrate proteins and provides a physical environment optimized to promote and accelerate protein folding. This Desulfosudis oleivorans (strain DSM 6200 / JCM 39069 / Hxd3) (Desulfococcus oleovorans) protein is Chaperonin GroEL.